Reading from the N-terminus, the 203-residue chain is MGNKWSKSWPQVRERMRRAPAPAADGVGAVSQDLAKHGAITSSNTAATNADCAWLEAQTEEEVGFPVKPQIPLRPMTYKGAVDLSFFLKEKGGLDGLIYSKKRQEILDLWVHNTQGYFPDWQNYTPGPGIRYPLTFGWCYKLVPVDPSEVEEANEGENNCLLHPICQHGIEDEEREVLQWKFDSSLARRHIARELHPEFYKDC.

The segment at 1–25 is disordered; that stretch reads MGNKWSKSWPQVRERMRRAPAPAAD. Residue Gly-2 is the site of N-myristoyl glycine; by host attachment. Position 6 is a phosphoserine; by host (Ser-6). Positions 59–62 are acidic; interacts with host PACS1 and PACS2; stabilizes the interaction of NEF/MHC-I with host AP1M1; necessary for MHC-I internalization; it reads TEEE. Residues 66–75 are SH3-binding; interaction with Src family tyrosine kinases; that stretch reads PVKPQIPLRP. The PxxP; stabilizes the interaction of NEF/MHC-I with host AP1M1; necessary for MHC-I internalization signature appears at 69-72; the sequence is PQIP. The segment at 105 to 121 is mediates dimerization, Nef-PTE1 interaction; that stretch reads EILDLWVHNTQGYFPDW. The segment at 145–177 is binding to ATP6V1H; it reads VDPSEVEEANEGENNCLLHPICQHGIEDEEREV. Residues 161–162 carry the Dileucine internalization motif; necessary for CD4 internalization motif; that stretch reads LL. The Diacidic; necessary for CD4 internalization motif lies at 171 to 172; that stretch reads ED.

The protein belongs to the lentivirus primate group Nef protein family. As to quaternary structure, monomer; cytosolic form. Homodimer; membrane bound form. Interacts with Nef associated p21-activated kinase (PAK2); this interaction activates PAK2. Associates with the Nef-MHC-I-AP1 complex; this complex is required for MHC-I internalization. Interacts (via C-terminus) with host PI3-kinase. Interacts with host PACS1; this interaction seems to be weak. Interacts with host PACS2. Interacts with host LCK and MAPK3; these interactions inhibit the kinase activity of the latter. Interacts with host ATP6V1H; this interaction may play a role in CD4 endocytosis. Associates with the CD4-Nef-AP2 complex; this complex is required for CD4 internalization. Interacts with host AP2 subunit alpha and AP2 subunit sigma2. Interacts with TCR-zeta chain; this interaction up-regulates the Fas ligand (FasL) surface expression. Interacts with host HCK, LYN, and SRC; these interactions activate the Src family kinases. Interacts with MAP3K5; this interaction inhibits the Fas and TNFR-mediated death signals. Interacts with beta-COP and PTE1. Interacts with human RACK1; this increases Nef phosphorylation by PKC. Interacts with TP53; this interaction decreases the half-life of TP53, protecting the infected cell against p53-mediated apoptosis. In terms of processing, the virion-associated Nef proteins are cleaved by the viral protease to release the soluble C-terminal core protein. Nef is probably cleaved concomitantly with viral structural proteins on maturation of virus particles. Myristoylated. Post-translationally, phosphorylated on serine residues, probably by host PKCdelta and theta.

The protein localises to the host cell membrane. Its subcellular location is the virion. It localises to the secreted. It is found in the host Golgi apparatus membrane. Its function is as follows. Factor of infectivity and pathogenicity, required for optimal virus replication. Alters numerous pathways of T-lymphocyte function and down-regulates immunity surface molecules in order to evade host defense and increase viral infectivity. Alters the functionality of other immunity cells, like dendritic cells, monocytes/macrophages and NK cells. In infected CD4(+) T-lymphocytes, down-regulates the surface MHC-I, mature MHC-II, CD4, CD28, CCR5 and CXCR4 molecules. Mediates internalization and degradation of host CD4 through the interaction of with the cytoplasmic tail of CD4, the recruitment of AP-2 (clathrin adapter protein complex 2), internalization through clathrin coated pits, and subsequent transport to endosomes and lysosomes for degradation. Diverts host MHC-I molecules to the trans-Golgi network-associated endosomal compartments by an endocytic pathway to finally target them for degradation. MHC-I down-regulation may involve AP-1 (clathrin adapter protein complex 1) or possibly Src family kinase-ZAP70/Syk-PI3K cascade recruited by PACS2. In consequence infected cells are masked for immune recognition by cytotoxic T-lymphocytes. Decreasing the number of immune receptors also prevents reinfection by more HIV particles (superinfection). Down-regulates host SERINC3 and SERINC5 thereby excluding these proteins from the viral particles. Virion infectivity is drastically higher when SERINC3 or SERINC5 are excluded from the viral envelope, because these host antiviral proteins impair the membrane fusion event necessary for subsequent virion penetration. Functionally, bypasses host T-cell signaling by inducing a transcriptional program nearly identical to that of anti-CD3 cell activation. Interaction with TCR-zeta chain up-regulates the Fas ligand (FasL). Increasing surface FasL molecules and decreasing surface MHC-I molecules on infected CD4(+) cells send attacking cytotoxic CD8+ T-lymphocytes into apoptosis. In terms of biological role, plays a role in optimizing the host cell environment for viral replication without causing cell death by apoptosis. Protects the infected cells from apoptosis in order to keep them alive until the next virus generation is ready to strike. Inhibits the Fas and TNFR-mediated death signals by blocking MAP3K5/ASK1. Decreases the half-life of TP53, protecting the infected cell against p53-mediated apoptosis. Inhibits the apoptotic signals regulated by the Bcl-2 family proteins through the formation of a Nef/PI3-kinase/PAK2 complex that leads to activation of PAK2 and induces phosphorylation of host BAD. Its function is as follows. Extracellular Nef protein targets CD4(+) T-lymphocytes for apoptosis by interacting with CXCR4 surface receptors. This is Protein Nef from Human immunodeficiency virus type 1 group M subtype J (isolate SE9280) (HIV-1).